Here is a 61-residue protein sequence, read N- to C-terminus: Small ribosomal subunit protein uS14B (61 aa).

The Zn(2+) site is built by Cys24, Cys27, Cys40, and Cys43.

This sequence belongs to the universal ribosomal protein uS14 family. Zinc-binding uS14 subfamily. As to quaternary structure, part of the 30S ribosomal subunit. Contacts proteins S3 and S10. Requires Zn(2+) as cofactor.

Its function is as follows. Binds 16S rRNA, required for the assembly of 30S particles and may also be responsible for determining the conformation of the 16S rRNA at the A site. The polypeptide is Small ribosomal subunit protein uS14B (Nocardia farcinica (strain IFM 10152)).